We begin with the raw amino-acid sequence, 147 residues long: Basic phospholipase A2 beta-bungarotoxin A4 chain (147 aa).

The first 19 residues, 1–19 (MNPAHLLVLSAVCVSLLGA), serve as a signal peptide directing secretion. Positions 20-27 (ANIPPHPL) are excised as a propeptide. 6 disulfide bridges follow: Cys-54-Cys-146, Cys-56-Cys-72, Cys-71-Cys-127, Cys-78-Cys-120, Cys-88-Cys-113, and Cys-106-Cys-118. The Ca(2+) site is built by Tyr-55, Gly-57, and Gly-59. Residue His-75 is part of the active site. Asp-76 provides a ligand contact to Ca(2+). Asp-121 is an active-site residue.

This sequence belongs to the phospholipase A2 family. Group I subfamily. D49 sub-subfamily. Heterodimer; disulfide-linked. The A chain has phospholipase A2 activity and the B chain shows homology with the basic protease inhibitors. The cofactor is Ca(2+). As to expression, expressed by the venom gland.

Its subcellular location is the secreted. The enzyme catalyses a 1,2-diacyl-sn-glycero-3-phosphocholine + H2O = a 1-acyl-sn-glycero-3-phosphocholine + a fatty acid + H(+). Functionally, snake venom phospholipase A2 (PLA2) that shows presynaptic neurotoxicity. The A chain has phospholipase activity. PLA2 catalyzes the calcium-dependent hydrolysis of the 2-acyl groups in 3-sn-phosphoglycerides. The polypeptide is Basic phospholipase A2 beta-bungarotoxin A4 chain (Bungarus candidus (Malayan krait)).